A 300-amino-acid chain; its full sequence is Phospholipase A1 (300 aa).

A disulfide bridge connects residues C4 and C87. S137 serves as the catalytic Nucleophile. D165 acts as the Charge relay system in catalysis. 2 disulfides stabilise this stretch: C176–C181 and C218–C227. Catalysis depends on H229, which acts as the Charge relay system. 3 cysteine pairs are disulfide-bonded: C244-C268, C245-C293, and C261-C266.

This sequence belongs to the AB hydrolase superfamily. Lipase family. Expressed by the venom gland.

The protein localises to the secreted. The catalysed reaction is a 1,2-diacyl-sn-glycero-3-phosphocholine + H2O = a 2-acyl-sn-glycero-3-phosphocholine + a fatty acid + H(+). Its activity is regulated as follows. Local inflammatory effects are inhibited by antiserotonin drugs (cyproheptadine and methysergide), indomethacin, betamethasone, and antihistamine (chlorpheniramine). Catalyzes the hydrolysis of phosphatidylcholine with phospholipase A1 activity. Shows potent hemolytic activity that is responsible for its lethal effect. May act as an allergen. In vivo, induces local inflammatory effects. The polypeptide is Phospholipase A1 (Vespa basalis (Hornet)).